Reading from the N-terminus, the 383-residue chain is Gamma-butyrobetaine dioxygenase (383 aa).

Zn(2+) contacts are provided by Cys-46, Cys-48, Cys-51, and His-91. Residues His-209, Asp-211, and His-350 each coordinate Fe cation.

This sequence belongs to the gamma-BBH/TMLD family. As to quaternary structure, homodimer. Fe(2+) is required as a cofactor. L-ascorbate serves as cofactor.

It localises to the cytoplasm. The enzyme catalyses 4-(trimethylamino)butanoate + 2-oxoglutarate + O2 = carnitine + succinate + CO2. Its pathway is amine and polyamine biosynthesis; carnitine biosynthesis. Functionally, catalyzes the formation of L-carnitine from gamma-butyrobetaine. This is Gamma-butyrobetaine dioxygenase from Pseudomonas sp. (strain AK-1).